Here is a 111-residue protein sequence, read N- to C-terminus: Putative protein YddJ (111 aa).

The protein is Putative protein YddJ (yddJ) of Escherichia coli (strain K12).